The following is a 1157-amino-acid chain: DNA-directed RNA polymerase subunit beta (1157 aa).

The protein belongs to the RNA polymerase beta chain family. As to quaternary structure, the RNAP catalytic core consists of 2 alpha, 1 beta, 1 beta' and 1 omega subunit. When a sigma factor is associated with the core the holoenzyme is formed, which can initiate transcription.

It carries out the reaction RNA(n) + a ribonucleoside 5'-triphosphate = RNA(n+1) + diphosphate. Its function is as follows. DNA-dependent RNA polymerase catalyzes the transcription of DNA into RNA using the four ribonucleoside triphosphates as substrates. The protein is DNA-directed RNA polymerase subunit beta of Tropheryma whipplei (Whipple's bacillus).